A 238-amino-acid chain; its full sequence is RNA-binding protein pno1 (238 aa).

The region spanning 162 to 211 (QSRAIGRLAGKGGRTKFTIENVTKTRIVLADSKIHILGSYQNIQLARRAI) is the KH domain.

It belongs to the PNO1 family.

The protein resides in the nucleus. It is found in the nucleolus. The chain is RNA-binding protein pno1 (l(1)G0004) from Drosophila pseudoobscura pseudoobscura (Fruit fly).